The chain runs to 548 residues: Membrane protein insertase YidC (548 aa).

A helical membrane pass occupies residues Asn-6 to Asp-26. A disordered region spans residues Asn-28–Gly-56. Residues Pro-29–Thr-42 are compositionally biased toward low complexity. The next 4 membrane-spanning stretches (helical) occupy residues Phe-350 to Tyr-370, Phe-424 to Ile-444, Leu-458 to Ile-478, and Pro-499 to Val-519.

The protein belongs to the OXA1/ALB3/YidC family. Type 1 subfamily. As to quaternary structure, interacts with the Sec translocase complex via SecD. Specifically interacts with transmembrane segments of nascent integral membrane proteins during membrane integration.

It is found in the cell inner membrane. Required for the insertion and/or proper folding and/or complex formation of integral membrane proteins into the membrane. Involved in integration of membrane proteins that insert both dependently and independently of the Sec translocase complex, as well as at least some lipoproteins. Aids folding of multispanning membrane proteins. This Salmonella newport (strain SL254) protein is Membrane protein insertase YidC.